A 263-amino-acid chain; its full sequence is Regulatory protein RecX (263 aa).

The protein belongs to the RecX family.

It is found in the cytoplasm. Functionally, modulates RecA activity. This Bacillus pumilus (strain SAFR-032) protein is Regulatory protein RecX.